The chain runs to 324 residues: Alkanal monooxygenase beta chain (324 aa).

Belongs to the bacterial luciferase oxidoreductase family. Heterodimer of an alpha and a beta chain.

It carries out the reaction a long-chain fatty aldehyde + FMNH2 + O2 = a long-chain fatty acid + hnu + FMN + H2O + 2 H(+). In terms of biological role, light-emitting reaction in luminous bacteria. The specific role of the beta subunit is unknown, but it is absolutely required for bioluminescence activity. The polypeptide is Alkanal monooxygenase beta chain (luxB) (Photorhabdus laumondii subsp. laumondii (strain DSM 15139 / CIP 105565 / TT01) (Photorhabdus luminescens subsp. laumondii)).